Consider the following 235-residue polypeptide: MSCQSPIVVALDYPTMAQSIEMAKRLDPEQCRVKVGKELFTTAGPVILDELHKLGFEIFLDLKFHDIPNTVANAVCVAAKAGVWMVNVHASGGRRMMEASANALQKLPDNKTLLIAVTVLTSMDQSDLIEIGIDATPEQHVKRLAALAKSSGMDGVVCSAQESSMLSAELGKDFVLVTPGIRPAGSDQGDQKRIMTPVEAMAAGSHYLVMGRPITQANDPIAVLTQANADLGLMA.

Substrate-binding positions include Asp-12, Lys-34, 61–70 (DLKFHDIPNT), Thr-121, Arg-182, Gln-191, Gly-211, and Arg-212. Residue Lys-63 is the Proton donor of the active site.

The protein belongs to the OMP decarboxylase family. Type 1 subfamily. Homodimer.

The catalysed reaction is orotidine 5'-phosphate + H(+) = UMP + CO2. The protein operates within pyrimidine metabolism; UMP biosynthesis via de novo pathway; UMP from orotate: step 2/2. Its function is as follows. Catalyzes the decarboxylation of orotidine 5'-monophosphate (OMP) to uridine 5'-monophosphate (UMP). This chain is Orotidine 5'-phosphate decarboxylase, found in Marinomonas sp. (strain MWYL1).